We begin with the raw amino-acid sequence, 77 residues long: Serine protease inhibitor 2 (77 aa).

An N-terminal signal peptide occupies residues 1–17; that stretch reads MMFTPLIVLTLLVLATA. Cystine bridges form between Cys21/Cys53, Cys30/Cys48, Cys33/Cys44, Cys37/Cys74, and Cys55/Cys68. The 54-residue stretch at 21-74 folds into the TIL domain; it reads CGPNEQWSDCPKCELQCGESDKPCATICGEPKCYCSPDKYRRIPDGRCIRKIQC.

It localises to the secreted. Defends the organism against the host's proteinases. The sequence is that of Serine protease inhibitor 2 from Anisakis simplex (Herring worm).